The sequence spans 757 residues: Elongation factor G, mitochondrial (757 aa).

A mitochondrion-targeting transit peptide spans Met1–Cys41. Residues Lys66–Ser347 form the tr-type G domain. GTP-binding positions include Ala75–Thr82, Asp146–His150, and Asn200–Asp203.

This sequence belongs to the TRAFAC class translation factor GTPase superfamily. Classic translation factor GTPase family. EF-G/EF-2 subfamily.

Its subcellular location is the mitochondrion. It functions in the pathway protein biosynthesis; polypeptide chain elongation. Its function is as follows. Mitochondrial GTPase that catalyzes the GTP-dependent ribosomal translocation step during translation elongation. During this step, the ribosome changes from the pre-translocational (PRE) to the post-translocational (POST) state as the newly formed A-site-bound peptidyl-tRNA and P-site-bound deacylated tRNA move to the P and E sites, respectively. Catalyzes the coordinated movement of the two tRNA molecules, the mRNA and conformational changes in the ribosome. The protein is Elongation factor G, mitochondrial of Eremothecium gossypii (strain ATCC 10895 / CBS 109.51 / FGSC 9923 / NRRL Y-1056) (Yeast).